Here is a 505-residue protein sequence, read N- to C-terminus: Exoglucanase 1 (505 aa).

A signal peptide spans M1–A17. Q18 carries the pyrrolidone carboxylic acid modification. Residues Q18–N449 are catalytic. Cystine bridges form between C21–C88, C36–C41, C66–C87, and C77–C83. N-linked (GlcNAc...) asparagine glycosylation is found at N93 and N126. Intrachain disulfides connect C151-C410, C185-C223, C189-C222, C243-C269, C251-C256, and C274-C344. The active-site Nucleophile is the E225. Residue E230 is the Proton donor/acceptor of the active site. Residues N283 and N397 are each glycosylated (N-linked (GlcNAc...) asparagine). 2 disordered regions span residues T399–Q423 and G440–T472. The segment covering S409–Q423 has biased composition (polar residues). Over residues G447 to T470 the composition is skewed to low complexity. The interval P450 to T468 is linker. The CBM1 domain maps to A469–L505.

This sequence belongs to the glycosyl hydrolase 7 (cellulase C) family. In terms of processing, O-glycosylated. O-glycosylation of the cellulase linker provides protection from proteolysis. Linker glycans also contribute to binding affinity of cellobiohydrolases to cellulose.

Its subcellular location is the secreted. The enzyme catalyses Hydrolysis of (1-&gt;4)-beta-D-glucosidic linkages in cellulose and cellotetraose, releasing cellobiose from the non-reducing ends of the chains.. Functionally, exocellobiohydrolases (CBH) that catalyzes the hydrolysis of 1,4-beta-D-glucosidic bonds in cellulose to release the disaccharide cellobiose. The degradation of cellulose involves an interplay between different cellulolytic enzymes. Hydrolysis starts with endoglucanases (EGs), which cut internal beta-1,4-glucosidic bonds in cellulose to reduce the polymerization degree of the substrate and create new chain ends for exocellobiohydrolases (CBHs). The CBHs release the disaccharide cellobiose from the non-reducing end of the cellulose polymer chain. Finally, beta-1,4-glucosidases hydrolyze the cellobiose and other short cello-oligosaccharides into glucose units. In Trichoderma harzianum (Hypocrea lixii), this protein is Exoglucanase 1 (cbh1).